The primary structure comprises 1207 residues: Putative coatomer subunit alpha (1207 aa).

WD repeat units lie at residues 9–50 (SRSS…DRFD), 51–90 (GHDG…LLFS), 93–134 (GHMD…AILT), 135–174 (GHSH…MKNA), 210–249 (GHDR…AWEV), 254–293 (GHFN…AVQT), 296–336 (RDND…HALN), and 370–411 (SAWL…NSLP). Residues serine 409 and serine 942 each carry the phosphoserine modification.

As to quaternary structure, oligomeric complex that consists of at least the alpha, beta, beta', gamma, delta, epsilon and zeta subunits.

It is found in the cytoplasm. The protein localises to the golgi apparatus membrane. The coatomer is a cytosolic protein complex that binds to dilysine motifs and reversibly associates with Golgi non-clathrin-coated vesicles, which further mediate biosynthetic protein transport from the ER, via the Golgi up to the trans Golgi network. Coatomer complex is required for budding from Golgi membranes, and is essential for the retrograde Golgi-to-ER transport of dilysine-tagged proteins. The sequence is that of Putative coatomer subunit alpha from Schizosaccharomyces pombe (strain 972 / ATCC 24843) (Fission yeast).